The chain runs to 236 residues: MGRSPCCEKAHTNKGAWTKEEDQRLVDYIRNHGEGCWRSLPKSAGLLRCGKSCRLRWINYLRPDLKRGNFTDDEDQIIIKLHSLLGNKWSLIAGRLPGRTDNEIKNYWNTHIKRKLLSHGIDPQTHRQINESKTVSSQVVVPIQNDAVEYSFSNLAVKPKTENSSDNGASTSGTTTDEDLRQNGECYYSDNSGHIKLNLDLTLGFGSWSGRIVGVGSSADSKPWCDPVMEARLSLL.

2 consecutive HTH myb-type domains span residues 9–61 (KAHT…INYL) and 62–116 (RPDL…KRKL). 2 consecutive DNA-binding regions (H-T-H motif) follow at residues 37–61 (WRSL…INYL) and 89–112 (WSLI…NTHI). Residues 159–181 (PKTENSSDNGASTSGTTTDEDLR) are disordered. Residues 162–175 (ENSSDNGASTSGTT) are compositionally biased toward polar residues.

As to quaternary structure, interacts with BHLH012/MYC1 and BHLH042/TT8. Expressed in roots, stems, flower buds, and siliques.

It is found in the nucleus. This chain is Transcription repressor MYB6 (MYB6), found in Arabidopsis thaliana (Mouse-ear cress).